The following is a 133-amino-acid chain: Fatty acid-binding protein, heart (133 aa).

N-acetylvaline is present on V2. Phosphothreonine is present on T8. A Phosphotyrosine; by Tyr-kinases modification is found at Y20. S23 carries the post-translational modification Phosphoserine. Position 30 is a phosphothreonine (T30). S83 is modified (phosphoserine). 127–129 (RTY) is a binding site for (9Z)-octadecenoate. 127-129 (RTY) provides a ligand contact to hexadecanoate. 127–129 (RTY) serves as a coordination point for octadecanoate.

The protein belongs to the calycin superfamily. Fatty-acid binding protein (FABP) family.

Its subcellular location is the cytoplasm. FABPs are thought to play a role in the intracellular transport of long-chain fatty acids and their acyl-CoA esters. In Sus scrofa (Pig), this protein is Fatty acid-binding protein, heart (FABP3).